The sequence spans 716 residues: Probable glutamate--tRNA ligase, cytoplasmic (716 aa).

Ser-190 carries the phosphoserine modification. Position 210–212 (210–212 (RFP)) interacts with L-glutamate. A 'HIGH' region motif is present at residues 215 to 224 (PSGYLHIGHA). ATP is bound at residue His-220. L-glutamate-binding positions include Asp-246, 386–390 (YDFAC), and Arg-404. Residues Glu-407 and 441–445 (LLSKR) contribute to the ATP site. The 'KMSKS' region signature appears at 441–445 (LLSKR).

This sequence belongs to the class-I aminoacyl-tRNA synthetase family. Glutamate--tRNA ligase type 2 subfamily. In terms of assembly, component of a yeast aminoacyl-tRNA synthase (aaRS) complex formed by methionyl-tRNA synthase, glutamyl-tRNA synthase and the tRNA aminoacylation cofactor arc1 in a stoichiometric complex. Interacts with arc1/SPAC30C2.04.

It localises to the cytoplasm. The protein localises to the nucleus. The catalysed reaction is tRNA(Glu) + L-glutamate + ATP = L-glutamyl-tRNA(Glu) + AMP + diphosphate. Catalyzes the attachment of glutamate to tRNA(Glu) in a two-step reaction: glutamate is first activated by ATP to form Glu-AMP and then transferred to the acceptor end of tRNA(Glu). The chain is Probable glutamate--tRNA ligase, cytoplasmic (gus1) from Schizosaccharomyces pombe (strain 972 / ATCC 24843) (Fission yeast).